The primary structure comprises 565 residues: Urocanate hydratase (565 aa).

NAD(+)-binding positions include 61–62, Gln-139, 185–187, Glu-205, Arg-210, 251–252, 272–276, 282–283, and Tyr-331; these read GG, GMG, NA, QTSAH, and YL. Residue Cys-419 is part of the active site. The segment at 453-472 is disordered; sequence LDSGSVASPNRETESMRDGS. The segment covering 463–472 has biased composition (basic and acidic residues); that stretch reads RETESMRDGS. Gly-501 contacts NAD(+).

This sequence belongs to the urocanase family. NAD(+) serves as cofactor.

The protein localises to the cytoplasm. It catalyses the reaction 4-imidazolone-5-propanoate = trans-urocanate + H2O. It participates in amino-acid degradation; L-histidine degradation into L-glutamate; N-formimidoyl-L-glutamate from L-histidine: step 2/3. Functionally, catalyzes the conversion of urocanate to 4-imidazolone-5-propionate. This is Urocanate hydratase from Pseudomonas savastanoi pv. phaseolicola (strain 1448A / Race 6) (Pseudomonas syringae pv. phaseolicola (strain 1448A / Race 6)).